Here is a 637-residue protein sequence, read N- to C-terminus: 1-deoxy-D-xylulose-5-phosphate synthase (637 aa).

Residues His76 and 117–119 (AHS) contribute to the thiamine diphosphate site. Asp148 contacts Mg(2+). Thiamine diphosphate is bound by residues 149–150 (GA), Asn177, Tyr287, and Glu369. Position 177 (Asn177) interacts with Mg(2+).

The protein belongs to the transketolase family. DXPS subfamily. In terms of assembly, homodimer. It depends on Mg(2+) as a cofactor. Thiamine diphosphate serves as cofactor.

The catalysed reaction is D-glyceraldehyde 3-phosphate + pyruvate + H(+) = 1-deoxy-D-xylulose 5-phosphate + CO2. Its pathway is metabolic intermediate biosynthesis; 1-deoxy-D-xylulose 5-phosphate biosynthesis; 1-deoxy-D-xylulose 5-phosphate from D-glyceraldehyde 3-phosphate and pyruvate: step 1/1. Functionally, catalyzes the acyloin condensation reaction between C atoms 2 and 3 of pyruvate and glyceraldehyde 3-phosphate to yield 1-deoxy-D-xylulose-5-phosphate (DXP). The sequence is that of 1-deoxy-D-xylulose-5-phosphate synthase from Pelagibacter ubique (strain HTCC1062).